A 367-amino-acid chain; its full sequence is N-acetylmuramoyl-L-alanine amidase BlyA (367 aa).

The N-acetylmuramoyl-L-alanine amidase domain occupies 24–158 (VKKCVLHYTA…DITHKNCPAP (135 aa)). The tract at residues 178–204 (SGKSVSKASPTKPTTSSPSSSSAVSGS) is disordered. Residues 180 to 204 (KSVSKASPTKPTTSSPSSSSAVSGS) are compositionally biased toward low complexity. SH3b domains follow at residues 202–271 (SGSL…YVDV) and 298–367 (GKIK…GSTI).

It belongs to the N-acetylmuramoyl-L-alanine amidase 2 family.

Its subcellular location is the secreted. It catalyses the reaction Hydrolyzes the link between N-acetylmuramoyl residues and L-amino acid residues in certain cell-wall glycopeptides.. Autolysins are involved in some important biological processes such as cell separation, cell-wall turnover, competence for genetic transformation, formation of the flagella and sporulation. Involved in prophage SP-beta-mediated cell lysis. The protein is N-acetylmuramoyl-L-alanine amidase BlyA (blyA) of Bacillus subtilis (strain 168).